Consider the following 109-residue polypeptide: Putative pterin-4-alpha-carbinolamine dehydratase (109 aa).

The protein belongs to the pterin-4-alpha-carbinolamine dehydratase family.

It carries out the reaction (4aS,6R)-4a-hydroxy-L-erythro-5,6,7,8-tetrahydrobiopterin = (6R)-L-erythro-6,7-dihydrobiopterin + H2O. The protein is Putative pterin-4-alpha-carbinolamine dehydratase of Rickettsia canadensis (strain McKiel).